The chain runs to 861 residues: ATP-dependent helicase rhp16 (861 aa).

Positions 1–13 (MGTSCNKINSNSN) are enriched in polar residues. Residues 1–217 (MGTSCNKINS…KSIPSHERTH (217 aa)) form a disordered region. Basic and acidic residues-rich tracts occupy residues 14-23 (KGKENMHFVL) and 38-57 (VERDDKLDMETTRWNGKEFE). Residues 60 to 82 (LSTNKKLIIQSNNTSSQHSTPPL) are compositionally biased toward polar residues. Over residues 83–95 (SISDTSTHTGSST) the composition is skewed to low complexity. Positions 96 to 106 (DNVEANPNTGF) are enriched in polar residues. Basic residues predominate over residues 109–123 (ARKRSLRSSNLKKKF). A compositionally biased stretch (acidic residues) spans 131–145 (ESNESEFIDDDESDE). Low complexity predominate over residues 193-204 (ARASSSASSSSR). In terms of domain architecture, Helicase ATP-binding spans 268-442 (RQEDSSFGGG…FSLLRFLRAD (175 aa)). Position 281 to 288 (281 to 288 (DEMGMGKT)) interacts with ATP. Residues 393-396 (DEAH) carry the DEAH box motif. An RING-type zinc finger spans residues 609 to 652 (CKICDEVAQDAIESRCHHTFCRLCVTEYINAAGDGENVNCPSCF). In terms of domain architecture, Helicase C-terminal spans 695–848 (LVEELYLLRK…TIDQDEKALN (154 aa)).

Belongs to the SNF2/RAD54 helicase family.

The protein localises to the nucleus. In terms of biological role, involved in global genome repair (GGR) via nucleotide excision repair (NER), in conjunction with rhp7, after UV irradiation. The sequence is that of ATP-dependent helicase rhp16 (rhp16) from Schizosaccharomyces pombe (strain 972 / ATCC 24843) (Fission yeast).